The chain runs to 2121 residues: Non-reducing polyketide synthase aoiG (2121 aa).

In terms of domain architecture, Starter acyltransferase (SAT) spans 5–258 (YIFGDQTVRV…LPVSIYAPYH (254 aa)). In terms of domain architecture, Ketosynthase family 3 (KS3) spans 386–817 (SSKIAIIGFS…GGNTAVLVED (432 aa)). Catalysis depends on for beta-ketoacyl synthase activity residues cysteine 558, histidine 693, and histidine 735. One can recognise a Malonyl-CoA:ACP transacylase (MAT) domain in the interval 921-1239 (FLFTGQGAQQ…LSVLHLAGVR (319 aa)). The segment at 1302–1433 (QKILEEEMTA…CTIELQRPHQ (132 aa)) is N-terminal hotdog fold. The PKS/mFAS DH domain occupies 1302–1608 (QKILEEEMTA…FQKVARRVLE (307 aa)). Histidine 1334 (proton acceptor; for dehydratase activity) is an active-site residue. The interval 1461–1608 (THKMRRGVAY…FQKVARRVLE (148 aa)) is C-terminal hotdog fold. Aspartate 1519 functions as the Proton donor; for dehydratase activity in the catalytic mechanism. Residues 1646-1723 (PHVEDAWQQV…SLRIYLNMSS (78 aa)) form the Carrier 1 domain. The residue at position 1683 (serine 1683) is an O-(pantetheine 4'-phosphoryl)serine. The segment covering 1728-1752 (DSIETSSYPTPDESTTTTITSPSGS) has biased composition (low complexity). Residues 1728–1760 (DSIETSSYPTPDESTTTTITSPSGSDRNVGRNS) form a disordered region. In terms of domain architecture, Carrier 2 spans 1763-1840 (DGVGTTVGLV…AITAALHAIF (78 aa)). An O-(pantetheine 4'-phosphoryl)serine modification is found at serine 1800. Residues 1872–1976 (TLFLFPDGSG…ILIDSPNPMG (105 aa)) form a TE/CLC (thioesterase/Claisen cyclase) domain region.

Requires pantetheine 4'-phosphate as cofactor.

Functionally, non-reducing polyketide synthase; part of the gene cluster that mediates the biosynthesis of a methylated derivative of known natural products orthosporin and diaporthin. AoiG catalyzes the biosynthesis of the hexaketide isocoumarin scaffold, via condensation of one acetyl-CoA starter unit with 6 malonyl-CoA units. An oxidoreductase that has still to be identified catalyzes the stereospecific reduction of the carbonyl moiety of the hexaketide isocoumarin scaffold to generate the S-configured secondary alcohol at C-11 of orthosporin. The methyltrasferase aoiF then catalyzes the biotransformation of not only orthosporin to diaporthin but also diaporthin to the final product, by performing a tandem methylation of the polyketide core. In Aspergillus oryzae (strain ATCC 42149 / RIB 40) (Yellow koji mold), this protein is Non-reducing polyketide synthase aoiG.